Consider the following 157-residue polypeptide: Protein Smg homolog (157 aa).

It belongs to the Smg family.

The sequence is that of Protein Smg homolog from Idiomarina loihiensis (strain ATCC BAA-735 / DSM 15497 / L2-TR).